A 131-amino-acid chain; its full sequence is Mediator of RNA polymerase II transcription subunit 31 (131 aa).

Residue alanine 2 is modified to N-acetylalanine.

Belongs to the Mediator complex subunit 31 family. Component of the Mediator complex, which is composed of MED1, MED4, MED6, MED7, MED8, MED9, MED10, MED11, MED12, MED13, MED13L, MED14, MED15, MED16, MED17, MED18, MED19, MED20, MED21, MED22, MED23, MED24, MED25, MED26, MED27, MED29, MED30, MED31, CCNC, CDK8 and CDC2L6/CDK11. The MED12, MED13, CCNC and CDK8 subunits form a distinct module termed the CDK8 module. Mediator containing the CDK8 module is less active than Mediator lacking this module in supporting transcriptional activation. Individual preparations of the Mediator complex lacking one or more distinct subunits have been variously termed ARC, CRSP, DRIP, PC2, SMCC and TRAP.

It is found in the nucleus. Functionally, component of the Mediator complex, a coactivator involved in the regulated transcription of nearly all RNA polymerase II-dependent genes. Mediator functions as a bridge to convey information from gene-specific regulatory proteins to the basal RNA polymerase II transcription machinery. Mediator is recruited to promoters by direct interactions with regulatory proteins and serves as a scaffold for the assembly of a functional preinitiation complex with RNA polymerase II and the general transcription factors. This is Mediator of RNA polymerase II transcription subunit 31 (MED31) from Homo sapiens (Human).